Here is a 365-residue protein sequence, read N- to C-terminus: Putative carbonic anhydrase-like protein 1 (365 aa).

The N-terminal stretch at 1-25 is a signal peptide; it reads MRFECSHFPLFLIILTCHISPLKSS. One can recognise an Alpha-carbonic anhydrase domain in the interval 28 to 356; the sequence is YQWSYDSDVF…TNNRLVRTNI (329 aa). Tyr-223 is a catalytic residue. Substrate-binding positions include Thr-295 and 295-296; that span reads TS.

Belongs to the alpha-carbonic anhydrase family.

It localises to the secreted. The chain is Putative carbonic anhydrase-like protein 1 (cah-1) from Caenorhabditis elegans.